A 323-amino-acid polypeptide reads, in one-letter code: Acetyl-coenzyme A carboxylase carboxyl transferase subunit alpha (323 aa).

The 255-residue stretch at 39 to 293 (RLSKKSQQLT…RRALADSLRQ (255 aa)) folds into the CoA carboxyltransferase C-terminal domain.

Belongs to the AccA family. Acetyl-CoA carboxylase is a heterohexamer composed of biotin carboxyl carrier protein (AccB), biotin carboxylase (AccC) and two subunits each of ACCase subunit alpha (AccA) and ACCase subunit beta (AccD).

It localises to the cytoplasm. It carries out the reaction N(6)-carboxybiotinyl-L-lysyl-[protein] + acetyl-CoA = N(6)-biotinyl-L-lysyl-[protein] + malonyl-CoA. It participates in lipid metabolism; malonyl-CoA biosynthesis; malonyl-CoA from acetyl-CoA: step 1/1. Functionally, component of the acetyl coenzyme A carboxylase (ACC) complex. First, biotin carboxylase catalyzes the carboxylation of biotin on its carrier protein (BCCP) and then the CO(2) group is transferred by the carboxyltransferase to acetyl-CoA to form malonyl-CoA. This is Acetyl-coenzyme A carboxylase carboxyl transferase subunit alpha from Paraburkholderia phymatum (strain DSM 17167 / CIP 108236 / LMG 21445 / STM815) (Burkholderia phymatum).